Reading from the N-terminus, the 183-residue chain is Lipocalin (183 aa).

The first 20 residues, 1–20 (MKGLVLSFALVALSALCVYG), serve as a signal peptide directing secretion. An intrachain disulfide couples cysteine 83 to cysteine 179.

The protein belongs to the calycin superfamily. Lipocalin family. Monomer. Expressed mainly in choroid plexus. Much lower expression in other brain areas, and absent from liver.

Its subcellular location is the secreted. Functionally, might have a transport function across the blood brain barrier. Is supposed to have similar functions as a transthyretin which must have evolved after the stage of the amphibians in evolution. In Rhinella marina (Cane toad), this protein is Lipocalin.